A 402-amino-acid polypeptide reads, in one-letter code: uncharacterized protein (402 aa).

Over 1–11 (MTPSNYQRTRW) the chain is Cytoplasmic. The helical transmembrane segment at 12 to 34 (LTLIGTIITQFALGSVYTWSLFN) threads the bilayer. Over 35–43 (GALSAKLDA) the chain is Periplasmic. A helical transmembrane segment spans residues 44–66 (PVSQVAFSFGLLSLGLAISSSVA). Residues 67 to 72 (GKLQER) are Cytoplasmic-facing. Residues 73-95 (FGVKRVTMASGILLGLGFFLTAH) form a helical membrane-spanning segment. The Periplasmic portion of the chain corresponds to 96 to 99 (SDNL). Residues 100–122 (MMLWLSAGVLVGLADGAGYLLTL) form a helical membrane-spanning segment. Over 123 to 134 (SNCVKWFPERKG) the chain is Cytoplasmic. The helical transmembrane segment at 135–154 (LISAFAIGSYGLGSLGFKFI) threads the bilayer. At 155-168 (DTQLLETVGLEKTF) the chain is on the periplasmic side. A helical transmembrane segment spans residues 169–186 (VIWGAIALLMIVFGATLM). Over 187–216 (KDAPKQEVKTSNGVVEKDYTLAESMRKPQY) the chain is Cytoplasmic. Residues 217 to 236 (WMLAVMFLTACMSGLYVIGV) form a helical membrane-spanning segment. Topologically, residues 237–250 (AKDIAQSLAHLDVV) are periplasmic. The helical transmembrane segment at 251 to 273 (SAANAVTVISIANLSGRLVLGIL) threads the bilayer. At 274–279 (SDKIAR) the chain is on the cytoplasmic side. Residues 280 to 302 (IRVITIGQVISLVGMAALLFAPL) form a helical membrane-spanning segment. The Periplasmic portion of the chain corresponds to 303–306 (NAVT). Residues 307-329 (FFAAIACVAFNFGGTITVFPSLV) form a helical membrane-spanning segment. The Cytoplasmic segment spans residues 330-341 (SEFFGLNNLAKN). Residues 342–364 (YGVIYLGFGIGSICGSIIASLFG) traverse the membrane as a helical segment. At 365–367 (GFY) the chain is on the periplasmic side. Residues 368–387 (VTFYVIFALLILSLALSTTI) traverse the membrane as a helical segment. Over 388–402 (RQPEQKMLREAHGSL) the chain is Cytoplasmic.

The protein belongs to the major facilitator superfamily. Interacts with BtsS and YpdA.

The protein resides in the cell inner membrane. Part of a nutrient-sensing regulatory network composed of the two-component regulatory systems BtsS/BtsR and YpdA/YpdB, and their respective target proteins, BtsT and YhjX. This is an uncharacterized protein from Escherichia coli (strain K12).